A 381-amino-acid polypeptide reads, in one-letter code: tRNA N6-adenosine threonylcarbamoyltransferase (381 aa).

Positions 114 and 118 each coordinate Fe cation. Residues 142–146 (VVSGG), aspartate 178, glycine 191, aspartate 195, and asparagine 321 each bind substrate. Residue aspartate 349 coordinates Fe cation.

The protein belongs to the KAE1 / TsaD family. Fe(2+) serves as cofactor.

The protein localises to the cytoplasm. The catalysed reaction is L-threonylcarbamoyladenylate + adenosine(37) in tRNA = N(6)-L-threonylcarbamoyladenosine(37) in tRNA + AMP + H(+). Functionally, required for the formation of a threonylcarbamoyl group on adenosine at position 37 (t(6)A37) in tRNAs that read codons beginning with adenine. Is involved in the transfer of the threonylcarbamoyl moiety of threonylcarbamoyl-AMP (TC-AMP) to the N6 group of A37, together with TsaE and TsaB. TsaD likely plays a direct catalytic role in this reaction. This is tRNA N6-adenosine threonylcarbamoyltransferase from Koribacter versatilis (strain Ellin345).